A 199-amino-acid chain; its full sequence is Twist-related protein (199 aa).

Positions 1–43 (MQEHQLSRVTSGNKKKYQSFDDESRDEKRMKCDSTDKLESNSN) are disordered. Residues 25-39 (RDEKRMKCDSTDKLE) show a composition bias toward basic and acidic residues. Positions 51 to 102 (THRVIANIRERQRTQALNQSFSTLRKIIPTLPSDKLSKIQTLRLAAMYIDFL) constitute a bHLH domain.

Efficient DNA binding requires dimerization with another bHLH protein. Homodimer. In terms of tissue distribution, expression is seen at the point of medusa formation in the ectodermal and endodermal bud tissues, and in the entocodon which gives rise to all smooth and striated muscle cells. After the subumbrellar plate differentiates from the endoderm, strong expression is detected until the medusa detaches from the gonzoid. Expression is observed in the distal part of the medusa but diminishes in entocodon-derived muscles as the tissues differentiate, with expression disappearing completely after stage 8. In later stages expression is seen in the distal and proximal parts of the bud and depending on state of maturity, in the developing gonadal tissue.

It localises to the nucleus. Its function is as follows. Probable transcription factor, which may be responsible for the formation of myoepithelial cells in early muscle development in larva and the formation of non-muscle tissues in later bud stages and mesoderm-like structures in the medusa. The chain is Twist-related protein from Podocoryna carnea (Hydrozoan).